The chain runs to 284 residues: Undecaprenyl-diphosphatase (284 aa).

8 helical membrane passes run 1–21 (MNWLHAIILGIVEGITEFLPV), 43–63 (ITAFTAIIQVGAIIAAILYFW), 88–108 (YTLGWGIILGSIPVGVVGLVF), 116–136 (LSSLWVVAIALILWSGVMWLG), 149–169 (IGIVDAIVIGCFQALAPLFPG), 193–213 (LSFFMGIPALVAAGIYESVSA), 225–245 (VAIGWGPTILATVVSLIVAYV), and 259–279 (FTGFMWYRVVVGLIIIGLILS).

The protein belongs to the UppP family.

The protein localises to the cell membrane. The enzyme catalyses di-trans,octa-cis-undecaprenyl diphosphate + H2O = di-trans,octa-cis-undecaprenyl phosphate + phosphate + H(+). In terms of biological role, catalyzes the dephosphorylation of undecaprenyl diphosphate (UPP). Confers resistance to bacitracin. The sequence is that of Undecaprenyl-diphosphatase from Cutibacterium acnes (strain DSM 16379 / KPA171202) (Propionibacterium acnes).